A 393-amino-acid polypeptide reads, in one-letter code: NAD(P)H-quinone oxidoreductase subunit H, chloroplastic (393 aa).

It belongs to the complex I 49 kDa subunit family. In terms of assembly, NDH is composed of at least 16 different subunits, 5 of which are encoded in the nucleus.

It is found in the plastid. Its subcellular location is the chloroplast thylakoid membrane. It catalyses the reaction a plastoquinone + NADH + (n+1) H(+)(in) = a plastoquinol + NAD(+) + n H(+)(out). The catalysed reaction is a plastoquinone + NADPH + (n+1) H(+)(in) = a plastoquinol + NADP(+) + n H(+)(out). In terms of biological role, NDH shuttles electrons from NAD(P)H:plastoquinone, via FMN and iron-sulfur (Fe-S) centers, to quinones in the photosynthetic chain and possibly in a chloroplast respiratory chain. The immediate electron acceptor for the enzyme in this species is believed to be plastoquinone. Couples the redox reaction to proton translocation, and thus conserves the redox energy in a proton gradient. In Gossypium barbadense (Sea Island cotton), this protein is NAD(P)H-quinone oxidoreductase subunit H, chloroplastic.